Here is a 56-residue protein sequence, read N- to C-terminus: Cytochrome b-c1 complex subunit 10 (56 aa).

Residues 1-12 lie on the Mitochondrial matrix side of the membrane; it reads MVTRFLGPRYRE. A helical transmembrane segment spans residues 13–35; that stretch reads LVKNWVPTAYTWGAVGAVGLVWA. At 36 to 56 the chain is on the mitochondrial intermembrane side; the sequence is TDWRLILDWVPYINGKFKKDN.

The protein belongs to the UQCR11/QCR10 family. In terms of assembly, component of the ubiquinol-cytochrome c oxidoreductase (cytochrome b-c1 complex, complex III, CIII), a multisubunit enzyme composed of 11 subunits. The complex is composed of 3 respiratory subunits cytochrome b, cytochrome c1 and Rieske protein UQCRFS1, 2 core protein subunits UQCRC1/QCR1 and UQCRC2/QCR2, and 6 low-molecular weight protein subunits UQCRH/QCR6, UQCRB/QCR7, UQCRQ/QCR8, UQCR10/QCR9, UQCR11/QCR10 and subunit 9, the cleavage product of Rieske protein UQCRFS1. The complex exists as an obligatory dimer and forms supercomplexes (SCs) in the inner mitochondrial membrane with NADH-ubiquinone oxidoreductase (complex I, CI) and cytochrome c oxidase (complex IV, CIV), resulting in different assemblies (supercomplex SCI(1)III(2)IV(1) and megacomplex MCI(2)III(2)IV(2)).

It localises to the mitochondrion inner membrane. Its function is as follows. Component of the ubiquinol-cytochrome c oxidoreductase, a multisubunit transmembrane complex that is part of the mitochondrial electron transport chain which drives oxidative phosphorylation. The respiratory chain contains 3 multisubunit complexes succinate dehydrogenase (complex II, CII), ubiquinol-cytochrome c oxidoreductase (cytochrome b-c1 complex, complex III, CIII) and cytochrome c oxidase (complex IV, CIV), that cooperate to transfer electrons derived from NADH and succinate to molecular oxygen, creating an electrochemical gradient over the inner membrane that drives transmembrane transport and the ATP synthase. The cytochrome b-c1 complex catalyzes electron transfer from ubiquinol to cytochrome c, linking this redox reaction to translocation of protons across the mitochondrial inner membrane, with protons being carried across the membrane as hydrogens on the quinol. In the process called Q cycle, 2 protons are consumed from the matrix, 4 protons are released into the intermembrane space and 2 electrons are passed to cytochrome c. QCR10 has a role in CIII assembly and RIP1 stability. In Homo sapiens (Human), this protein is Cytochrome b-c1 complex subunit 10 (UQCR11).